A 304-amino-acid polypeptide reads, in one-letter code: Ribonuclease HII (304 aa).

Positions 1-53 (MIRDTKQPIKVPAKPASRSGGKAKTVKPKTVKPKAVKAADGKAASAKASTSKA) are disordered. The segment covering 24–35 (KTVKPKTVKPKA) has biased composition (basic residues). The span at 36-53 (VKAADGKAASAKASTSKA) shows a compositional bias: low complexity. Residues 96 to 284 (WPIAGCDEAG…VAAAWQKIEG (189 aa)) enclose the RNase H type-2 domain. Asp102, Glu103, and Asp193 together coordinate a divalent metal cation.

Belongs to the RNase HII family. Mn(2+) is required as a cofactor. Mg(2+) serves as cofactor.

The protein localises to the cytoplasm. It carries out the reaction Endonucleolytic cleavage to 5'-phosphomonoester.. Its function is as follows. Endonuclease that specifically degrades the RNA of RNA-DNA hybrids. The chain is Ribonuclease HII from Rhodopseudomonas palustris (strain ATCC BAA-98 / CGA009).